The sequence spans 29 residues: Cyclotide cter-N (29 aa).

A cross-link (cyclopeptide (Gly-Asn)) is located at residues 1–29; that stretch reads GSAFCGETCVLGTCYTPDCSCTALVCLKN. Intrachain disulfides connect C5/C19, C9/C21, and C14/C26.

This is a cyclic peptide.

Its subcellular location is the secreted. Functionally, probably participates in a plant defense mechanism. The polypeptide is Cyclotide cter-N (Clitoria ternatea (Butterfly pea)).